A 266-amino-acid polypeptide reads, in one-letter code: Phosphatidylglycerol--prolipoprotein diacylglyceryl transferase (266 aa).

A run of 7 helical transmembrane segments spans residues 10 to 30, 56 to 76, 92 to 112, 120 to 140, 172 to 192, 200 to 220, and 234 to 254; these read VAIA…LVGI, LVFW…VFFY, WEGG…TWWF, FFEL…AGRI, PSQL…LWFY, MAVS…VEFV, and WLTM…GLIA. A 1,2-diacyl-sn-glycero-3-phospho-(1'-sn-glycerol) is bound at residue Arg139.

Belongs to the Lgt family.

The protein localises to the cell inner membrane. It carries out the reaction L-cysteinyl-[prolipoprotein] + a 1,2-diacyl-sn-glycero-3-phospho-(1'-sn-glycerol) = an S-1,2-diacyl-sn-glyceryl-L-cysteinyl-[prolipoprotein] + sn-glycerol 1-phosphate + H(+). The protein operates within protein modification; lipoprotein biosynthesis (diacylglyceryl transfer). Its function is as follows. Catalyzes the transfer of the diacylglyceryl group from phosphatidylglycerol to the sulfhydryl group of the N-terminal cysteine of a prolipoprotein, the first step in the formation of mature lipoproteins. The protein is Phosphatidylglycerol--prolipoprotein diacylglyceryl transferase of Ectopseudomonas mendocina (strain ymp) (Pseudomonas mendocina).